Here is a 1015-residue protein sequence, read N- to C-terminus: Formate dehydrogenase, nitrate-inducible, major subunit (1015 aa).

Positions 1-33 form a signal peptide, tat-type signal; sequence MDVSRRQFFKICAGGMAGTTVAALGFAPKQALA. The 4Fe-4S Mo/W bis-MGD-type domain occupies 43–106; it reads AKEIRNTCTY…GLLDYVNSEN (64 aa). 4 residues coordinate [4Fe-4S] cluster: Cys-50, Cys-53, Cys-57, and Cys-92. Sec-196 is a binding site for Mo-bis(molybdopterin guanine dinucleotide). Sec-196 is a non-standard amino acid (selenocysteine).

This sequence belongs to the prokaryotic molybdopterin-containing oxidoreductase family. In terms of assembly, trimer of heterotrimers, consisting of subunits alpha, beta and gamma. Requires Mo-bis(molybdopterin guanine dinucleotide) as cofactor. [4Fe-4S] cluster is required as a cofactor. Post-translationally, exported by the Tat system. The position of the signal peptide cleavage has not been experimentally proven.

The protein localises to the periplasm. It carries out the reaction a quinone + formate + H(+) = a quinol + CO2. Formate dehydrogenase allows E.coli to use formate as major electron donor during anaerobic respiration, when nitrate is used as electron acceptor. The alpha subunit FdnG contains the formate oxidation site. Electrons are transferred from formate to menaquinone in the gamma subunit (FdnI), through the 4Fe-4S clusters in the beta subunit (FdnH). Formate dehydrogenase-N is part of a system that generates proton motive force, together with the dissimilatory nitrate reductase (Nar). The chain is Formate dehydrogenase, nitrate-inducible, major subunit (fdnG) from Escherichia coli (strain K12).